The sequence spans 434 residues: Putative B3 domain-containing protein Os04g0347400 (434 aa).

DNA-binding regions (TF-B3) lie at residues 27 to 124 (SFHK…FDTT), 150 to 246 (KPQF…FGIN), and 326 to 432 (WIKK…DRVE).

Its subcellular location is the nucleus. In Oryza sativa subsp. japonica (Rice), this protein is Putative B3 domain-containing protein Os04g0347400.